A 304-amino-acid polypeptide reads, in one-letter code: Ribonuclease Z (304 aa).

Residues H63, H65, D67, H68, H143, D213, and H271 each coordinate Zn(2+). D67 functions as the Proton acceptor in the catalytic mechanism.

Belongs to the RNase Z family. Homodimer. The cofactor is Zn(2+).

It catalyses the reaction Endonucleolytic cleavage of RNA, removing extra 3' nucleotides from tRNA precursor, generating 3' termini of tRNAs. A 3'-hydroxy group is left at the tRNA terminus and a 5'-phosphoryl group is left at the trailer molecule.. In terms of biological role, zinc phosphodiesterase, which displays some tRNA 3'-processing endonuclease activity. Probably involved in tRNA maturation, by removing a 3'-trailer from precursor tRNA. The protein is Ribonuclease Z of Porphyromonas gingivalis (strain ATCC BAA-308 / W83).